Reading from the N-terminus, the 132-residue chain is Salivary cystatin-L2 (132 aa).

The N-terminal stretch at 1 to 18 is a signal peptide; the sequence is MTSSLALVLVFGGAAVCA. The region spanning 28–117 is the Cystatin domain; sequence ERSNQDDPEY…RTCTTVIYRN (90 aa). The required for interaction with mouse ANXA2 stretch occupies residues 87–131; that stretch reads TCELTSTYNKDTCQANANAAQRTCTTVIYRNLQGEKSISSFECAA. 2 disulfides stabilise this stretch: Cys-88/Cys-99 and Cys-110/Cys-129.

The protein belongs to the cystatin family. Monomer. Interacts (via loop 2) with mouse ANXA2; the interaction results in reduced activation of mouse NLRC4 inflammasome formation upon Anaplasma phagocytophilum infection. Detected in salivary gland and midgut.

The protein resides in the secreted. Functionally, contributes to the suppression of the host's immune response to tick salivary proteins and is important for successful feeding on hosts. Inhibitor of cysteine proteinases. Inhibits host immune responses, probably via its inhibition of host cathepsins. Inhibits host papain (in vitro). Inhibits host cathepsin L (CTSL) (in vitro). Inhibits host cathepsin L2 (CTSV) (in vitro). Attenuates IFN-beta (IFNB1)-triggered JAK/STAT signaling pathway in mouse dendritic cells. Suppresses induction of interferon-stimulated gene IRF7 and production of CXCL10 in lipopolysaccharide (LPS)-activated dendritic cells. In terms of biological role, (Microbial infection) Down-regulates TLR2-mediated host responses to infection by Borrelia burgdorferi and the production of chemokines CCL3 and CXCL10 by host dendritic cells. Enhances infection by the tick-transmitted pathogen B.burgdorferi (in vitro). Its function is as follows. (Microbial infection) Inhibits host inflammatory responses to Anaplasma phagocytophilum infection. Interacts with mouse ANXA2 and suppresses oligomerization of NLRC4, a key component of host inflammasomes that sense A.phagocytophilum infection. Indirectly targets caspase-1 (CASP1) activation and subsequent IL-1beta (IL1B) and IL18 release by inhibiting reactive oxygen species (ROS) production from NADPH oxidase complex in A.phagocytophilum-infected mouse macrophages. (Microbial infection) Promotes replication of tick-borne encephalitis virus in mouse dendritic cells and reduces anti-viral effect of host IFN-beta (IFNB1). This is Salivary cystatin-L2 from Ixodes scapularis (Black-legged tick).